Here is an 83-residue protein sequence, read N- to C-terminus: Cytochrome b559 subunit alpha (83 aa).

Residues 21–35 (IIHSITIPSLFIAGW) form a helical membrane-spanning segment. Histidine 23 is a binding site for heme.

As to quaternary structure, heterodimer of an alpha subunit and a beta subunit. PSII is composed of 1 copy each of membrane proteins PsbA, PsbB, PsbC, PsbD, PsbE, PsbF, PsbH, PsbI, PsbJ, PsbK, PsbL, PsbM, PsbT, PsbX, PsbY, PsbZ, Psb30/Ycf12, at least 3 peripheral proteins of the oxygen-evolving complex and a large number of cofactors. It forms dimeric complexes. The cofactor is heme b.

The protein resides in the plastid. Its subcellular location is the chloroplast thylakoid membrane. In terms of biological role, this b-type cytochrome is tightly associated with the reaction center of photosystem II (PSII). PSII is a light-driven water:plastoquinone oxidoreductase that uses light energy to abstract electrons from H(2)O, generating O(2) and a proton gradient subsequently used for ATP formation. It consists of a core antenna complex that captures photons, and an electron transfer chain that converts photonic excitation into a charge separation. The polypeptide is Cytochrome b559 subunit alpha (Pisum sativum (Garden pea)).